The chain runs to 138 residues: uncharacterized protein (138 aa).

A disordered region spans residues 1–73 (MCSAGQLLGG…NHTGEPVGDD (73 aa)). The segment covering 7 to 18 (LLGGGGGGGGSG) has biased composition (gly residues). The span at 19-29 (GERDEDRDALA) shows a compositional bias: basic and acidic residues. A compositionally biased stretch (low complexity) spans 30-43 (ERAAAGTEQESGAS). A helical transmembrane segment spans residues 106 to 126 (VIVIFFWVMLWFLGLPAFGLV).

This sequence belongs to the FAM241 family.

It is found in the membrane. This is an uncharacterized protein from Bos taurus (Bovine).